Reading from the N-terminus, the 229-residue chain is Thylakoid lumenal 19 kDa protein, chloroplastic (229 aa).

The protein resides in the plastid. It localises to the chloroplast thylakoid lumen. This Arabidopsis thaliana (Mouse-ear cress) protein is Thylakoid lumenal 19 kDa protein, chloroplastic.